A 787-amino-acid chain; its full sequence is Integrin beta-6 (787 aa).

The first 21 residues, M1–G21, serve as a signal peptide directing secretion. In terms of domain architecture, PSI spans G22–Q71. The Extracellular segment spans residues G22 to P708. 19 cysteine pairs are disulfide-bonded: C23–C41, C31–C454, C34–C59, C44–C70, C197–C204, C252–C293, C394–C406, C426–C452, C456–C476, C467–C479, C481–C490, C492–C519, C502–C517, C511–C522, C524–C537, C539–C560, C544–C558, C552–C563, and C565–C574. 2 N-linked (GlcNAc...) asparagine glycosylation sites follow: N48 and N97. The region spanning Y131 to L371 is the VWFA domain. Mg(2+) contacts are provided by D140, S142, and S144. Positions 144, 147, 148, and 179 each coordinate Ca(2+). Residues N235, D237, P239, and E240 each contribute to the Ca(2+) site. Residue E240 coordinates Mg(2+). N260 carries N-linked (GlcNAc...) asparagine glycosylation. D271 and K355 together coordinate Ca(2+). N-linked (GlcNAc...) asparagine glycosylation is present at N387. N-linked (GlcNAc...) asparagine glycosylation occurs at N418. I-EGF domains are found at residues C456–E491, C492–Q538, C539–N575, and C576–E615. N-linked (GlcNAc...) asparagine glycans are attached at residues N463 and N471. N541 is a glycosylation site (N-linked (GlcNAc...) asparagine). Residue N575 is glycosylated (N-linked (GlcNAc...) asparagine). Disulfide bonds link C576–C599, C583–C597, C591–C602, C604–C614, C617–C620, C624–C670, C630–C649, C633–C645, and C678–C701. The helical transmembrane segment at M709–W729 threads the bilayer. The segment at K730–T757 is interaction with HAX1. Over K730–G787 the chain is Cytoplasmic.

It belongs to the integrin beta chain family. As to quaternary structure, heterodimer of an alpha and a beta subunit. Interacts with FLNB. Interacts with HAX1. ITGAV:ITGB6 interacts with FBN1. ITGAV:ITGB6 interacts with TGFB1.

It is found in the cell membrane. It localises to the cell junction. The protein localises to the focal adhesion. Functionally, integrin alpha-V:beta-6 (ITGAV:ITGB6) is a receptor for fibronectin and cytotactin. It recognizes the sequence R-G-D in its ligands. ITGAV:ITGB6 acts as a receptor for fibrillin-1 (FBN1) and mediates R-G-D-dependent cell adhesion to FBN1. Integrin alpha-V:beta-6 (ITGAV:ITGB6) mediates R-G-D-dependent release of transforming growth factor beta-1 (TGF-beta-1) from regulatory Latency-associated peptide (LAP), thereby playing a key role in TGF-beta-1 activation. This is Integrin beta-6 (ITGB6) from Ovis aries (Sheep).